The following is a 37-amino-acid chain: Large ribosomal subunit protein bL36 (37 aa).

The protein belongs to the bacterial ribosomal protein bL36 family.

The protein is Large ribosomal subunit protein bL36 of Azoarcus sp. (strain BH72).